Consider the following 392-residue polypeptide: Speckle-type POZ protein-like A (392 aa).

Positions 31-161 (KFSYMWTINN…DDKLTLFCEV (131 aa)) constitute an MATH domain. In terms of domain architecture, BTB spans 200–267 (TDCSLYVGGQ…IYTGKAPNLE (68 aa)).

It belongs to the Tdpoz family. As to quaternary structure, homodimer. Heterodimer with SPOP. Component of cullin-RING-based BCR (BTB-CUL3-RBX1) E3 ubiquitin-protein ligase complexes containing homodimeric SPOPL or the heterodimer formed by SPOP and SPOPL.

Its subcellular location is the nucleus. It participates in protein modification; protein ubiquitination. In terms of biological role, component of a cullin-RING-based BCR (BTB-CUL3-RBX1) E3 ubiquitin-protein ligase complex that mediates the ubiquitination and subsequent proteasomal degradation of target proteins, but with relatively low efficiency. This Danio rerio (Zebrafish) protein is Speckle-type POZ protein-like A (spopla).